Reading from the N-terminus, the 701-residue chain is Elongation factor G 2 (701 aa).

Residues 8 to 290 (ERYRNIGISA…AVIDYLPSPA (283 aa)) enclose the tr-type G domain. GTP contacts are provided by residues 17–24 (AHIDAGKT), 88–92 (DTPGH), and 142–145 (NKMD).

This sequence belongs to the TRAFAC class translation factor GTPase superfamily. Classic translation factor GTPase family. EF-G/EF-2 subfamily.

It localises to the cytoplasm. Catalyzes the GTP-dependent ribosomal translocation step during translation elongation. During this step, the ribosome changes from the pre-translocational (PRE) to the post-translocational (POST) state as the newly formed A-site-bound peptidyl-tRNA and P-site-bound deacylated tRNA move to the P and E sites, respectively. Catalyzes the coordinated movement of the two tRNA molecules, the mRNA and conformational changes in the ribosome. This Cupriavidus pinatubonensis (strain JMP 134 / LMG 1197) (Cupriavidus necator (strain JMP 134)) protein is Elongation factor G 2.